The following is a 278-amino-acid chain: UPF0761 membrane protein NT05HA_1801 (278 aa).

6 consecutive transmembrane segments (helical) span residues 32 to 52, 88 to 108, 123 to 143, 168 to 188, 203 to 223, and 232 to 252; these read MLAI…FPVF, QMSA…INSI, PIFT…LLVG, LLSF…YMVV, LIAA…IVTF, and AMAT…FVLL.

The protein belongs to the UPF0761 family.

Its subcellular location is the cell inner membrane. In Aggregatibacter aphrophilus (strain NJ8700) (Haemophilus aphrophilus), this protein is UPF0761 membrane protein NT05HA_1801.